A 383-amino-acid polypeptide reads, in one-letter code: Glucose-1-phosphate adenylyltransferase (383 aa).

Residues Tyr-100, Gly-165, 180 to 181, and Ser-191 each bind alpha-D-glucose 1-phosphate; that span reads EK.

Belongs to the bacterial/plant glucose-1-phosphate adenylyltransferase family. In terms of assembly, homotetramer.

The catalysed reaction is alpha-D-glucose 1-phosphate + ATP + H(+) = ADP-alpha-D-glucose + diphosphate. Its pathway is glycan biosynthesis; glycogen biosynthesis. Functionally, involved in the biosynthesis of ADP-glucose, a building block required for the elongation reactions to produce glycogen. Catalyzes the reaction between ATP and alpha-D-glucose 1-phosphate (G1P) to produce pyrophosphate and ADP-Glc. This chain is Glucose-1-phosphate adenylyltransferase, found in Clostridium kluyveri (strain ATCC 8527 / DSM 555 / NBRC 12016 / NCIMB 10680 / K1).